The following is a 289-amino-acid chain: Transcription factor MafA (289 aa).

Positions 52 to 73 (STPISTPCSSVPSSPSFCAPSP) are enriched in low complexity. Disordered stretches follow at residues 52-87 (STPISTPCSSVPSSPSFCAPSPGAQSGVNPSNPNAA) and 126-164 (HHHHHHHQGYDGFRGQQYPGDEMAPSGHHHQVHHHHHHH). Polar residues predominate over residues 74–87 (GAQSGVNPSNPNAA). Positions 152–164 (GHHHQVHHHHHHH) are enriched in basic residues. The basic motif stretch occupies residues 201 to 226 (RLKQKRRTLKNRGYAQSCRYKRVQQR). Residues 201–264 (RLKQKRRTLK…DLYKDKYEKL (64 aa)) enclose the bZIP domain. The interval 229–250 (LETEKCQLQSQVEQLKQEVSRL) is leucine-zipper. A disordered region spans residues 266 to 289 (SRSFTTRESPPQGNPGKANADFFM). The span at 267–276 (RSFTTRESPP) shows a compositional bias: polar residues.

It belongs to the bZIP family. Maf subfamily.

It is found in the nucleus. In terms of biological role, transcription factor, possibly involved in transcription regulation during lens development. The polypeptide is Transcription factor MafA (mafa) (Xenopus tropicalis (Western clawed frog)).